A 1257-amino-acid polypeptide reads, in one-letter code: Period circadian protein homolog 2 (1257 aa).

Residues 1–60 (MNGYVDFSPSPTSPTKEPGAPQPTQAVLQEDVDMSSGSSGNENCSTGRDSQGSDCDDNGK) form a disordered region. Polar residues predominate over residues 35–53 (SSGSSGNENCSTGRDSQGS). The short motif at 109–118 (LIRTLKELKV) is the Nuclear export signal 1 element. Residues 179–246 (ITSEYIVKNA…FHSYTTPYKL (68 aa)) enclose the PAS 1 domain. Residues 306 to 310 (LCCLL) carry the LXXLL motif. Positions 319–385 (YEAPRIPPEK…MLAIHKKILQ (67 aa)) constitute a PAS 2 domain. The PAC domain occupies 393-436 (YSPIRFRTRNGEYITLDTSWSSFINPWSRKISFIIGRHKVRVGP). The Nuclear export signal 2 signature appears at 460–469 (LTEQIHRLLM). Disordered regions lie at residues 471–565 (PVPH…GASL) and 617–638 (PSRK…PSKV). Residues 478–482 (SGYGS) form an important for protein stability region. Residues 493 to 504 (MSQTSSSDSNGQ) are compositionally biased toward polar residues. Positions 510–709 (RRSGIFKTSG…GAAGGLSQEK (200 aa)) are CSNK1E binding domain. Phosphoserine is present on residues Ser-525, Ser-528, Ser-531, Ser-538, and Ser-544. Residue Thr-554 is modified to Phosphothreonine. Ser-659, Ser-693, Ser-697, Ser-706, Ser-758, and Ser-763 each carry phosphoserine. The segment at 757-832 (RSRAQASDRG…SDTSQSSCPS (76 aa)) is disordered. The Nuclear localization signal signature appears at 778–794 (KKTGKNRKLKSKRVKTR). Basic residues predominate over residues 779–792 (KTGKNRKLKSKRVK). Residues 821-832 (SPSDTSQSSCPS) show a composition bias toward low complexity. A Phosphothreonine modification is found at Thr-858. The interval 882–1067 (EFAVQPLPFA…DLCSATGSAL (186 aa)) is interaction with PPARG. A Phosphoserine modification is found at Ser-939. Phosphothreonine is present on Thr-964. The residue at position 971 (Ser-971) is a Phosphoserine. The Nuclear export signal 3 signature appears at 983 to 990 (LQLNLLQL). Positions 994–1044 (PEGSTGAAGTLGTTGTAASGLDCTSGTSRDRQPKAPPTCNEPSDTQNSDAI) are disordered. Over residues 996 to 1014 (GSTGAAGTLGTTGTAASGL) the composition is skewed to low complexity. The span at 1033–1044 (NEPSDTQNSDAI) shows a compositional bias: polar residues. The LXXLL motif lies at 1051–1055 (LNLLL). Residues 1070-1092 (SGASATSDSLGSSSLGFGTSQSG) show a composition bias toward low complexity. Residues 1070–1115 (SGASATSDSLGSSSLGFGTSQSGAGSSDTSHTSKYFGSIDSSENNH) form a disordered region. A compositionally biased stretch (polar residues) spans 1093–1111 (AGSSDTSHTSKYFGSIDSS). Phosphoserine is present on Ser-1126. Positions 1157-1257 (SRDLQAVLKE…LTGPRIEAQT (101 aa)) are CRY binding domain. The segment at 1224–1257 (PYEEDSPSPGLCDTSEAKEEEGEQLTGPRIEAQT) is disordered.

In terms of assembly, homodimer. Component of the circadian core oscillator, which includes the CRY proteins, CLOCK or NPAS2, BMAL1 or BMAL2, CSNK1D and/or CSNK1E, TIMELESS, and the PER proteins. Interacts with CLOCK-BMAL1 (off DNA). Interacts with BMAL2. Interacts directly with PER1 and PER3, and through a C-terminal domain, with CRY1 and CRY2. Interacts (via PAS 2 domain) with TIMELESS. Interacts with NFIL3. Different large complexes have been identified with different repressive functions. The core of PER complexes is composed of at least PER1, PER2, PER3, CRY1, CRY2, CSNK1D and/or CSNK1E. The large PER complex involved in the repression of transcriptional termination is composed of at least PER2, CDK9, DDX5, DHX9, NCBP1 and POLR2A (active). The large PER complex involved in the histone deacetylation is composed of at least HDAC1, PER2, SFPQ and SIN3A. The large PER complex involved in the histone methylation is composed of at least PER2, CBX3, TRIM28, SUV39H1 and/or SUV39H2; CBX3 mediates the formation of the complex. Interacts with SETX; the interaction inhibits termination of circadian target genes. Interacts with the nuclear receptors HNF4A, NR1D1, NR4A2, RORA, PPARA, PPARG and THRA; the interaction with at least PPARG is ligand dependent. Interacts with PML. Interacts (phosphorylated) with BTRC and FBXW11; the interactions trigger proteasomal degradation. Interacts with NONO and SFPQ. Interacts with CAVIN3. Interacts with MAGEL2. Interacts with MAP1LC3B. Interacts with HNF4A. In terms of processing, acetylated. Deacetylated by SIRT1, resulting in decreased protein stability. Deacetylated by SIRT6, preventing its degradation by the proteasome, resulting in increased protein stability. Post-translationally, phosphorylated by CSNK1E and CSNK1D. Phosphorylation results in PER2 protein degradation. May be dephosphorylated by PP1. Ubiquitinated, leading to its proteasomal degradation. Ubiquitination may be inhibited by CRY1. In terms of tissue distribution, in the brain, high expression in SCN during the subjective day. Constitutive expression in the cornu ammonis and in the dentate gyrus of the hippocampus. Also expressed in the piriform cortex and the glomeruli of the olfactory bulb, and at a lower extent in the cerebral cortex. Not expressed in the pars tuberalis and the Purkinje neurons. Also expressed in adipose tissue (white and brown), heart, kidney, bladder, lumbar spinal cord, skeletal muscle, spleen, lung, pancreas and liver with highest levels in skeletal muscle and liver and lowest levels in spleen.

The protein localises to the nucleus. The protein resides in the cytoplasm. Its subcellular location is the perinuclear region. Its function is as follows. Transcriptional repressor which forms a core component of the circadian clock. The circadian clock, an internal time-keeping system, regulates various physiological processes through the generation of approximately 24 hour circadian rhythms in gene expression, which are translated into rhythms in metabolism and behavior. It is derived from the Latin roots 'circa' (about) and 'diem' (day) and acts as an important regulator of a wide array of physiological functions including metabolism, sleep, body temperature, blood pressure, endocrine, immune, cardiovascular, and renal function. Consists of two major components: the central clock, residing in the suprachiasmatic nucleus (SCN) of the brain, and the peripheral clocks that are present in nearly every tissue and organ system. Both the central and peripheral clocks can be reset by environmental cues, also known as Zeitgebers (German for 'timegivers'). The predominant Zeitgeber for the central clock is light, which is sensed by retina and signals directly to the SCN. The central clock entrains the peripheral clocks through neuronal and hormonal signals, body temperature and feeding-related cues, aligning all clocks with the external light/dark cycle. Circadian rhythms allow an organism to achieve temporal homeostasis with its environment at the molecular level by regulating gene expression to create a peak of protein expression once every 24 hours to control when a particular physiological process is most active with respect to the solar day. Transcription and translation of core clock components (CLOCK, NPAS2, BMAL1, BMAL2, PER1, PER2, PER3, CRY1 and CRY2) plays a critical role in rhythm generation, whereas delays imposed by post-translational modifications (PTMs) are important for determining the period (tau) of the rhythms (tau refers to the period of a rhythm and is the length, in time, of one complete cycle). A diurnal rhythm is synchronized with the day/night cycle, while the ultradian and infradian rhythms have a period shorter and longer than 24 hours, respectively. Disruptions in the circadian rhythms contribute to the pathology of cardiovascular diseases, cancer, metabolic syndrome and aging. A transcription/translation feedback loop (TTFL) forms the core of the molecular circadian clock mechanism. Transcription factors, CLOCK or NPAS2 and BMAL1 or BMAL2, form the positive limb of the feedback loop, act in the form of a heterodimer and activate the transcription of core clock genes and clock-controlled genes (involved in key metabolic processes), harboring E-box elements (5'-CACGTG-3') within their promoters. The core clock genes: PER1/2/3 and CRY1/2 which are transcriptional repressors form the negative limb of the feedback loop and interact with the CLOCK|NPAS2-BMAL1|BMAL2 heterodimer inhibiting its activity and thereby negatively regulating their own expression. This heterodimer also activates nuclear receptors NR1D1/2 and RORA/B/G, which form a second feedback loop and which activate and repress BMAL1 transcription, respectively. PER1 and PER2 proteins transport CRY1 and CRY2 into the nucleus with appropriate circadian timing, but also contribute directly to repression of clock-controlled target genes through interaction with several classes of RNA-binding proteins, helicases and others transcriptional repressors. PER appears to regulate circadian control of transcription by at least three different modes. First, interacts directly with the CLOCK-BMAL1 at the tail end of the nascent transcript peak to recruit complexes containing the SIN3-HDAC that remodel chromatin to repress transcription. Second, brings H3K9 methyltransferases such as SUV39H1 and SUV39H2 to the E-box elements of the circadian target genes, like PER2 itself or PER1. The recruitment of each repressive modifier to the DNA seems to be very precisely temporally orchestrated by the large PER complex, the deacetylases acting before than the methyltransferases. Additionally, large PER complexes are also recruited to the target genes 3' termination site through interactions with RNA-binding proteins and helicases that may play a role in transcription termination to regulate transcription independently of CLOCK-BMAL1 interactions. Recruitment of large PER complexes to the elongating polymerase at PER and CRY termination sites inhibited SETX action, impeding RNA polymerase II release and thereby repressing transcriptional reinitiation. May propagate clock information to metabolic pathways via the interaction with nuclear receptors. Coactivator of PPARA and corepressor of NR1D1, binds rhythmically at the promoter of nuclear receptors target genes like BMAL1 or G6PC1. Directly and specifically represses PPARG proadipogenic activity by blocking PPARG recruitment to target promoters and thereby transcriptional activation. Required for fatty acid and lipid metabolism, is involved as well in the regulation of circulating insulin levels. Plays an important role in the maintenance of cardiovascular functions through the regulation of NO and vasodilatatory prostaglandins production in aortas. Controls circadian glutamate uptake in synaptic vesicles through the regulation of VGLUT1 expression. May also be involved in the regulation of inflammatory processes. Represses the CLOCK-BMAL1 induced transcription of BHLHE40/DEC1 and ATF4. Negatively regulates the formation of the TIMELESS-CRY1 complex by competing with TIMELESS for binding to CRY1. The chain is Period circadian protein homolog 2 (Per2) from Mus musculus (Mouse).